Reading from the N-terminus, the 349-residue chain is Alanine racemase (349 aa).

The Proton acceptor; specific for D-alanine role is filled by Lys-35. Residue Lys-35 is modified to N6-(pyridoxal phosphate)lysine. A substrate-binding site is contributed by Arg-130. Tyr-244 functions as the Proton acceptor; specific for L-alanine in the catalytic mechanism. Met-292 serves as a coordination point for substrate.

It belongs to the alanine racemase family. Pyridoxal 5'-phosphate serves as cofactor.

It carries out the reaction L-alanine = D-alanine. The protein operates within amino-acid biosynthesis; D-alanine biosynthesis; D-alanine from L-alanine: step 1/1. Its function is as follows. Catalyzes the interconversion of L-alanine and D-alanine. May also act on other amino acids. This chain is Alanine racemase (alr), found in Dinoroseobacter shibae (strain DSM 16493 / NCIMB 14021 / DFL 12).